The following is a 196-amino-acid chain: Small ribosomal subunit protein uS4c (196 aa).

The segment at 15–36 (LGTLPGLTSKRPRSGSDLKNPL) is disordered. The region spanning 89–150 (MRLDNILFRL…KQRSKALIQN (62 aa)) is the S4 RNA-binding domain.

Belongs to the universal ribosomal protein uS4 family. Part of the 30S ribosomal subunit. Contacts protein S5. The interaction surface between S4 and S5 is involved in control of translational fidelity.

The protein resides in the plastid. The protein localises to the chloroplast. In terms of biological role, one of the primary rRNA binding proteins, it binds directly to 16S rRNA where it nucleates assembly of the body of the 30S subunit. Its function is as follows. With S5 and S12 plays an important role in translational accuracy. This is Small ribosomal subunit protein uS4c (rps4) from Yucca filamentosa (Bear-grass).